Here is a 123-residue protein sequence, read N- to C-terminus: Snaclec echicetin subunit beta (123 aa).

One can recognise a C-type lectin domain in the interval 1 to 121; the sequence is NCLPDWSVYE…SGEFYFVCKC (121 aa). 3 disulfides stabilise this stretch: Cys2-Cys13, Cys30-Cys119, and Cys96-Cys111.

This sequence belongs to the snaclec family. Heterodimer of subunits alpha and beta; disulfide-linked. Forms an active complex with the pentameric immunoglobuline Mkappa (IgMkappa). As to expression, expressed by the venom gland.

It is found in the secreted. Its function is as follows. Echicetin itself inhibits aggregation of washed platelets induced by vWF, thrombin or alboaggregin-A. However, when complexed with the pentameric plasma immunoglobulin Mkappa (IgMkappa), echicetin binds specifically to GPIb and activates platelets. This is caused by P-selectin expression and activation of alpha-IIb/beta-3 as well as tyrosine phosphorylation of several signal transduction molecules, including p53/56(LYN), p64, p72(SYK), p70 to p90, and p120. In vivo, it induces thrombocytopenia when injected into mice, probably accounting of activation of platelets rather than inhibition. The protein is Snaclec echicetin subunit beta of Echis carinatus sochureki (Saw-scaled viper).